The primary structure comprises 402 residues: Tryptophan synthase beta chain 2 (402 aa).

K97 bears the N6-(pyridoxal phosphate)lysine mark.

This sequence belongs to the TrpB family. Tetramer of two alpha and two beta chains. It depends on pyridoxal 5'-phosphate as a cofactor.

It carries out the reaction (1S,2R)-1-C-(indol-3-yl)glycerol 3-phosphate + L-serine = D-glyceraldehyde 3-phosphate + L-tryptophan + H2O. The protein operates within amino-acid biosynthesis; L-tryptophan biosynthesis; L-tryptophan from chorismate: step 5/5. Functionally, the beta subunit is responsible for the synthesis of L-tryptophan from indole and L-serine. In Wolinella succinogenes (strain ATCC 29543 / DSM 1740 / CCUG 13145 / JCM 31913 / LMG 7466 / NCTC 11488 / FDC 602W) (Vibrio succinogenes), this protein is Tryptophan synthase beta chain 2 (trpB2).